Consider the following 629-residue polypeptide: Coiled-coil domain-containing protein 93 (629 aa).

The interval 1–23 is disordered; sequence MGLPKGPEGQGLPEVETREDEEQ. Residues 1–428 are sufficient for interaction with CCDC22; that stretch reads MGLPKGPEGQ…ETLKAERAPG (428 aa). Coiled coils occupy residues 231-430 and 558-599; these read LSAA…PGEK and LRQM…LLEK. S298, S301, and S305 each carry phosphoserine. Positions 446-629 are sufficient for interaction with WASHC2C; sequence THNEDLDRRY…LLSKIKAKAS (184 aa).

It belongs to the CCDC93 family. As to quaternary structure, component of the commander complex consisting of the CCC subcomplex and the retriever subcomplex. Component of the CCC (COMMD/CCDC22/CCDC93) subcomplex consisting of COMMD1, COMMD2, COMMD3, COMMD4, COMMD5, COMMD6, COMMD7, COMMD8, COMMD9, COMMD10, CCDC22 and CCDC93. Forms a coiled-coil heterodimer with CCDC22; this heterodimer interacts with the guanine nucleotide exchange factor DENND10; the interaction is direct. Interacts with WASHC1. Interacts directly with WASHC2C. Interacts with SNX17 and SNX31.

It is found in the early endosome. Component of the commander complex that is essential for endosomal recycling of transmembrane cargos; the commander complex is composed of composed of the CCC subcomplex and the retriever subcomplex. Component of the CCC complex, which is involved in the regulation of endosomal recycling of surface proteins, including integrins, signaling receptor and channels. The CCC complex associates with SNX17, retriever and WASH complexes to prevent lysosomal degradation and promote cell surface recycling of numerous cargos such as integrins ITGA5:ITGB1. Involved in copper-dependent ATP7A trafficking between the trans-Golgi network and vesicles in the cell periphery; the function is proposed to depend on its association within the CCC complex and cooperation with the WASH complex on early endosomes and is dependent on its interaction with WASHC2C. In Mus musculus (Mouse), this protein is Coiled-coil domain-containing protein 93 (Ccdc93).